The chain runs to 539 residues: 3-methylmercaptopropionyl-CoA ligase (539 aa).

Thr185 lines the Mg(2+) pocket. Positions 231, 303, 324, 325, and 329 each coordinate ATP. Mg(2+) is bound at residue Glu330. ATP is bound by residues Gln359, Asp417, Arg432, and Lys523.

It belongs to the ATP-dependent AMP-binding enzyme family. Homodimer. The cofactor is Mg(2+).

The catalysed reaction is 3-(methylsulfanyl)propanoate + ATP + CoA = 3-(methylsulfanyl)propanoyl-CoA + AMP + diphosphate. Its activity is regulated as follows. ADP acts as a competitive inhibitor and inhibits the ligase activity. Involved in the assimilation of dimethylsulphoniopropionate (DMSP), an important compound in the fixation of carbon in marine phytoplankton. Catalyzes the ATP-dependent ligation of methylmercaptopropionate (MMPA) and CoA to yield methylmercaptopropionate-CoA (MMPA-CoA). The protein is 3-methylmercaptopropionyl-CoA ligase of Ruegeria lacuscaerulensis (strain DSM 11314 / KCTC 2953 / ITI-1157) (Silicibacter lacuscaerulensis).